The following is an 858-amino-acid chain: Elongation factor 2 (858 aa).

Residues 17-362 (ANIRNMSVIA…MITIHLPSPV (346 aa)) form the tr-type G domain. 26 to 33 (AHVDHGKS) contacts GTP. Phosphothreonine occurs at positions 57 and 59. GTP is bound by residues 158-161 (NKMD) and 216-218 (SGL). Diphthamide is present on His-715.

Belongs to the TRAFAC class translation factor GTPase superfamily. Classic translation factor GTPase family. EF-G/EF-2 subfamily. Binds to 80S ribosomes. Actively translating ribosomes show mutually exclusive binding of eIF5a (EIF5A or EIF5A2) and EEF2/eEF2. Interacts with SERBP1; interaction sequesters EEF2/eEF2 at the A-site of the ribosome, thereby blocking the interaction sites of the mRNA-tRNA complex, promoting ribosome stabilization and hibernation. Interacts with HABP4; interaction takes place at the A-site of hibernating ribosomes and promotes ribosome stabilization. Phosphorylation by EF-2 kinase completely inactivates EF-2. In terms of processing, diphthamide is 2-[3-carboxyamido-3-(trimethyl-ammonio)propyl]histidine.

The protein localises to the cytoplasm. Its subcellular location is the nucleus. It carries out the reaction GTP + H2O = GDP + phosphate + H(+). Functionally, catalyzes the GTP-dependent ribosomal translocation step during translation elongation. During this step, the ribosome changes from the pre-translocational (PRE) to the post-translocational (POST) state as the newly formed A-site-bound peptidyl-tRNA and P-site-bound deacylated tRNA move to the P and E sites, respectively. Catalyzes the coordinated movement of the two tRNA molecules, the mRNA and conformational changes in the ribosome. The protein is Elongation factor 2 (EEF2) of Gallus gallus (Chicken).